We begin with the raw amino-acid sequence, 85 residues long: UPF0298 protein SUB0431 (85 aa).

This sequence belongs to the UPF0298 family.

Its subcellular location is the cytoplasm. The polypeptide is UPF0298 protein SUB0431 (Streptococcus uberis (strain ATCC BAA-854 / 0140J)).